We begin with the raw amino-acid sequence, 774 residues long: Lysyl oxidase homolog 2 (774 aa).

The N-terminal stretch at 1–25 (MERRGSSCLCRCLALLALLPTLSLA) is a signal peptide. SRCR domains lie at 58 to 159 (LRLA…VVCS), 188 to 302 (IRAI…VSCV), 326 to 425 (VRLR…VRCN), and 435 to 544 (LRLN…VACS). 9 cysteine pairs are disulfide-bonded: Cys-84–Cys-148, Cys-97–Cys-158, Cys-128–Cys-138, Cys-218–Cys-291, Cys-231–Cys-301, Cys-265–Cys-275, Cys-351–Cys-414, Cys-364–Cys-424, and Cys-395–Cys-405. N-linked (GlcNAc...) asparagine glycosylation occurs at Asn-288. Asn-455 carries N-linked (GlcNAc...) asparagine glycosylation. Cystine bridges form between Cys-464-Cys-530, Cys-477-Cys-543, and Cys-511-Cys-521. Residues 548–751 (PDLVLNAEIV…WMYNCHIGGS (204 aa)) form a lysyl-oxidase like region. Ca(2+) contacts are provided by Asp-549 and Leu-550. Intrachain disulfides connect Cys-573–Cys-625, Cys-579–Cys-695, Cys-657–Cys-673, and Cys-663–Cys-685. Cu cation is bound by residues His-626, His-628, and His-630. N-linked (GlcNAc...) asparagine glycosylation is present at Asn-644. The segment at residues 653 to 689 (KASFCLEDTECEGDIQKSYECANFGEQGITMGCWDMY) is a cross-link (lysine tyrosylquinone (Lys-Tyr)). Tyr-689 is subject to 2',4',5'-topaquinone. Glu-722, Asp-724, Asn-727, and Asn-728 together coordinate Ca(2+). Cys-732 and Cys-746 are joined by a disulfide.

Belongs to the lysyl oxidase family. Component of some chromatin repressor complex. Interacts with SNAI1. Interacts with TAF10. Interacts with HSPA5. Interacts with EFEMP2. It depends on Cu cation as a cofactor. The cofactor is lysine tyrosylquinone residue. In terms of processing, the lysine tyrosylquinone cross-link (LTQ) is generated by condensation of the epsilon-amino group of a lysine with a topaquinone produced by oxidation of tyrosine. N-glycosylated. N-glycosylation on Asn-455 and Asn-644 may be essential for proper folding and secretion; may be composed of a fucosylated carbohydrates attached to a trimannose N-linked glycan core.

Its subcellular location is the secreted. The protein resides in the extracellular space. The protein localises to the extracellular matrix. It localises to the basement membrane. It is found in the nucleus. Its subcellular location is the chromosome. The protein resides in the endoplasmic reticulum. It catalyses the reaction L-lysyl-[protein] + O2 + H2O = (S)-2-amino-6-oxohexanoyl-[protein] + H2O2 + NH4(+). With respect to regulation, specifically inhibited by a mouse monoclonal antibody AB0023, inhibition occurs in a non-competitive manner. Its function is as follows. Mediates the post-translational oxidative deamination of lysine residues on target proteins leading to the formation of deaminated lysine (allysine). Acts as a transcription corepressor and specifically mediates deamination of trimethylated 'Lys-4' of histone H3 (H3K4me3), a specific tag for epigenetic transcriptional activation. Shows no activity against histone H3 when it is trimethylated on 'Lys-9' (H3K9me3) or 'Lys-27' (H3K27me3) or when 'Lys-4' is monomethylated (H3K4me1) or dimethylated (H3K4me2). Also mediates deamination of methylated TAF10, a member of the transcription factor IID (TFIID) complex, which induces release of TAF10 from promoters, leading to inhibition of TFIID-dependent transcription. LOXL2-mediated deamination of TAF10 results in transcriptional repression of genes required for embryonic stem cell pluripotency including POU5F1/OCT4, NANOG, KLF4 and SOX2. Involved in epithelial to mesenchymal transition (EMT) via interaction with SNAI1 and participates in repression of E-cadherin CDH1, probably by mediating deamination of histone H3. During EMT, involved with SNAI1 in negatively regulating pericentromeric heterochromatin transcription. SNAI1 recruits LOXL2 to pericentromeric regions to oxidize histone H3 and repress transcription which leads to release of heterochromatin component CBX5/HP1A, enabling chromatin reorganization and acquisition of mesenchymal traits. Interacts with the endoplasmic reticulum protein HSPA5 which activates the IRE1-XBP1 pathway of the unfolded protein response, leading to expression of several transcription factors involved in EMT and subsequent EMT induction. When secreted into the extracellular matrix, promotes cross-linking of extracellular matrix proteins by mediating oxidative deamination of peptidyl lysine residues in precursors to fibrous collagen and elastin. Acts as a regulator of sprouting angiogenesis, probably via collagen IV scaffolding. Acts as a regulator of chondrocyte differentiation, probably by regulating expression of factors that control chondrocyte differentiation. This is Lysyl oxidase homolog 2 (LOXL2) from Bos taurus (Bovine).